The sequence spans 260 residues: Large ribosomal subunit protein uL2y (260 aa).

The interval 227–248 (RRDKSAGAKVGQIAARRTGRRR) is disordered.

The protein belongs to the universal ribosomal protein uL2 family.

This Arabidopsis thaliana (Mouse-ear cress) protein is Large ribosomal subunit protein uL2y (RPL8B).